Here is a 560-residue protein sequence, read N- to C-terminus: Arginine--tRNA ligase (560 aa).

Residues 121 to 131 carry the 'HIGH' region motif; sequence PNIAKPFSMGH.

Belongs to the class-I aminoacyl-tRNA synthetase family. As to quaternary structure, monomer.

It localises to the cytoplasm. The catalysed reaction is tRNA(Arg) + L-arginine + ATP = L-arginyl-tRNA(Arg) + AMP + diphosphate. This Exiguobacterium sp. (strain ATCC BAA-1283 / AT1b) protein is Arginine--tRNA ligase.